An 82-amino-acid chain; its full sequence is Small ribosomal subunit protein uS17 (82 aa).

This sequence belongs to the universal ribosomal protein uS17 family. As to quaternary structure, part of the 30S ribosomal subunit.

Functionally, one of the primary rRNA binding proteins, it binds specifically to the 5'-end of 16S ribosomal RNA. The protein is Small ribosomal subunit protein uS17 of Ehrlichia ruminantium (strain Gardel).